The chain runs to 192 residues: Thymidylate kinase (192 aa).

ATP is bound at residue 7-14 (GIDCVGKS).

This sequence belongs to the thymidylate kinase family.

The enzyme catalyses dTMP + ATP = dTDP + ADP. In terms of biological role, phosphorylation of dTMP to form dTDP in both de novo and salvage pathways of dTTP synthesis. The chain is Thymidylate kinase from Campylobacter jejuni subsp. jejuni serotype O:23/36 (strain 81-176).